A 180-amino-acid chain; its full sequence is Type-1 fimbrial protein, C chain (180 aa).

An N-terminal signal peptide occupies residues 1 to 23; sequence MKLKFISMAVFSALTLGVATNAS. A disulfide bridge links Cys-44 with Cys-84.

It belongs to the fimbrial protein family.

It is found in the fimbrium. Functionally, fimbriae (also called pili), polar filaments radiating from the surface of the bacterium to a length of 0.5-1.5 micrometers and numbering 100-300 per cell, enable bacteria to colonize the epithelium of specific host organs. The polypeptide is Type-1 fimbrial protein, C chain (pilC) (Escherichia coli O6:H1 (strain CFT073 / ATCC 700928 / UPEC)).